The following is a 282-amino-acid chain: Phosphatidylserine decarboxylase proenzyme (282 aa).

Catalysis depends on charge relay system; for autoendoproteolytic cleavage activity residues aspartate 88, histidine 145, and serine 248. Serine 248 acts as the Schiff-base intermediate with substrate; via pyruvic acid; for decarboxylase activity in catalysis. Serine 248 carries the post-translational modification Pyruvic acid (Ser); by autocatalysis.

The protein belongs to the phosphatidylserine decarboxylase family. PSD-B subfamily. Prokaryotic type I sub-subfamily. Heterodimer of a large membrane-associated beta subunit and a small pyruvoyl-containing alpha subunit. It depends on pyruvate as a cofactor. Post-translationally, is synthesized initially as an inactive proenzyme. Formation of the active enzyme involves a self-maturation process in which the active site pyruvoyl group is generated from an internal serine residue via an autocatalytic post-translational modification. Two non-identical subunits are generated from the proenzyme in this reaction, and the pyruvate is formed at the N-terminus of the alpha chain, which is derived from the carboxyl end of the proenzyme. The autoendoproteolytic cleavage occurs by a canonical serine protease mechanism, in which the side chain hydroxyl group of the serine supplies its oxygen atom to form the C-terminus of the beta chain, while the remainder of the serine residue undergoes an oxidative deamination to produce ammonia and the pyruvoyl prosthetic group on the alpha chain. During this reaction, the Ser that is part of the protease active site of the proenzyme becomes the pyruvoyl prosthetic group, which constitutes an essential element of the active site of the mature decarboxylase.

The protein localises to the cell membrane. It carries out the reaction a 1,2-diacyl-sn-glycero-3-phospho-L-serine + H(+) = a 1,2-diacyl-sn-glycero-3-phosphoethanolamine + CO2. It participates in phospholipid metabolism; phosphatidylethanolamine biosynthesis; phosphatidylethanolamine from CDP-diacylglycerol: step 2/2. Catalyzes the formation of phosphatidylethanolamine (PtdEtn) from phosphatidylserine (PtdSer). The polypeptide is Phosphatidylserine decarboxylase proenzyme (Dechloromonas aromatica (strain RCB)).